We begin with the raw amino-acid sequence, 210 residues long: Somatotropin-1 (210 aa).

An N-terminal signal peptide occupies residues M1–A22. H38 is a binding site for Zn(2+). A disulfide bond links C71 and C183. E192 lines the Zn(2+) pocket. Residues C200 and C208 are joined by a disulfide bond.

The protein belongs to the somatotropin/prolactin family.

Its subcellular location is the secreted. Functionally, growth hormone plays an important role in growth control and is involved in the regulation of several anabolic processes. Implicated as an osmoregulatory substance important for seawater adaptation. In Oncorhynchus nerka (Sockeye salmon), this protein is Somatotropin-1 (gh1).